A 60-amino-acid chain; its full sequence is Large ribosomal subunit protein uL30 (60 aa).

The protein belongs to the universal ribosomal protein uL30 family. Part of the 50S ribosomal subunit.

The protein is Large ribosomal subunit protein uL30 of Desulfotalea psychrophila (strain LSv54 / DSM 12343).